A 231-amino-acid polypeptide reads, in one-letter code: Orotidine 5'-phosphate decarboxylase (231 aa).

Substrate-binding positions include D11, K33, 60 to 69 (DLKFHDIPNT), T120, R181, Q190, G210, and R211. K62 functions as the Proton donor in the catalytic mechanism.

The protein belongs to the OMP decarboxylase family. Type 1 subfamily. In terms of assembly, homodimer.

It carries out the reaction orotidine 5'-phosphate + H(+) = UMP + CO2. Its pathway is pyrimidine metabolism; UMP biosynthesis via de novo pathway; UMP from orotate: step 2/2. Its function is as follows. Catalyzes the decarboxylation of orotidine 5'-monophosphate (OMP) to uridine 5'-monophosphate (UMP). This chain is Orotidine 5'-phosphate decarboxylase, found in Vibrio cholerae serotype O1 (strain ATCC 39541 / Classical Ogawa 395 / O395).